We begin with the raw amino-acid sequence, 275 residues long: Large ribosomal subunit protein uL2 (275 aa).

The interval G222–K275 is disordered. Residues D229–N239 show a composition bias toward basic and acidic residues.

The protein belongs to the universal ribosomal protein uL2 family. In terms of assembly, part of the 50S ribosomal subunit. Forms a bridge to the 30S subunit in the 70S ribosome.

One of the primary rRNA binding proteins. Required for association of the 30S and 50S subunits to form the 70S ribosome, for tRNA binding and peptide bond formation. It has been suggested to have peptidyltransferase activity; this is somewhat controversial. Makes several contacts with the 16S rRNA in the 70S ribosome. In Psychrobacter arcticus (strain DSM 17307 / VKM B-2377 / 273-4), this protein is Large ribosomal subunit protein uL2.